We begin with the raw amino-acid sequence, 437 residues long: MPVIDESTMTYAEACRYFPGGVNSPIRACLPVRIVPPIVSSACRDIFIDSFGNNFIDFCGSWGSLIHGHSHPKILDAICNAASHGTSYGLTSENEISLASTLFSCLDLEDYKLRFVSSGTEATMTAVRLACGVTKCSIIVKFLGCYHGHADVLLKGISVDENNLQNVAHIVDTYFAGQPCLPLTLILPYNDVMIFEEVMHQIGERVACVIFEPICINMGVILPKHGFIESILAMCRRYSALSIMDEVVTGFRMGIRGMRSIMDVTADITVYGKILGGGMPVAALLAHQNIMDHLLPLGTVFQAGTLSGNPVAMAAGKASIELCCEPNFYSKLENLTEGFLSPIEEIIRSKGFPVSLVRSGSMFSFFFRDTPPANLSEVQQCDQERFGLFYRQAFSLGVYLSPASTEASFISSVHSRENLAYTQNVLIDSLVKSFDNV.

Residue lysine 273 is modified to N6-(pyridoxal phosphate)lysine.

Belongs to the class-III pyridoxal-phosphate-dependent aminotransferase family. HemL subfamily. As to quaternary structure, homodimer. Requires pyridoxal 5'-phosphate as cofactor.

Its subcellular location is the cytoplasm. The enzyme catalyses (S)-4-amino-5-oxopentanoate = 5-aminolevulinate. It functions in the pathway porphyrin-containing compound metabolism; protoporphyrin-IX biosynthesis; 5-aminolevulinate from L-glutamyl-tRNA(Glu): step 2/2. In Chlamydia felis (strain Fe/C-56) (Chlamydophila felis), this protein is Glutamate-1-semialdehyde 2,1-aminomutase.